Reading from the N-terminus, the 223-residue chain is Putative nudix hydrolase 2 (223 aa).

The region spanning 72–213 (ASADGVSIIA…SIVVESTLLA (142 aa)) is the Nudix hydrolase domain. The Nudix box signature appears at 111 to 132 (GLIDAGETAQQAAIRELKEETG). Mg(2+)-binding residues include E126 and E130.

This sequence belongs to the Nudix hydrolase family. Requires Mg(2+) as cofactor. It depends on Mn(2+) as a cofactor.

Functionally, probably mediates the hydrolysis of some nucleoside diphosphate derivatives. This Caenorhabditis elegans protein is Putative nudix hydrolase 2 (ndx-2).